The primary structure comprises 512 residues: Maturase K (512 aa).

It belongs to the intron maturase 2 family. MatK subfamily.

It is found in the plastid. The protein resides in the chloroplast. Usually encoded in the trnK tRNA gene intron. Probably assists in splicing its own and other chloroplast group II introns. This chain is Maturase K, found in Wolffiella gladiata (Florida mud-midget).